Here is a 91-residue protein sequence, read N- to C-terminus: Small ribosomal subunit protein bS18 (91 aa).

It belongs to the bacterial ribosomal protein bS18 family. In terms of assembly, part of the 30S ribosomal subunit. Forms a tight heterodimer with protein bS6.

Functionally, binds as a heterodimer with protein bS6 to the central domain of the 16S rRNA, where it helps stabilize the platform of the 30S subunit. In Burkholderia ambifaria (strain MC40-6), this protein is Small ribosomal subunit protein bS18.